We begin with the raw amino-acid sequence, 337 residues long: Phenylalanine--tRNA ligase alpha subunit (337 aa).

Glu252 is a Mg(2+) binding site.

The protein belongs to the class-II aminoacyl-tRNA synthetase family. Phe-tRNA synthetase alpha subunit type 1 subfamily. As to quaternary structure, tetramer of two alpha and two beta subunits. Mg(2+) serves as cofactor.

It is found in the cytoplasm. The catalysed reaction is tRNA(Phe) + L-phenylalanine + ATP = L-phenylalanyl-tRNA(Phe) + AMP + diphosphate + H(+). This chain is Phenylalanine--tRNA ligase alpha subunit, found in Francisella tularensis subsp. holarctica (strain OSU18).